We begin with the raw amino-acid sequence, 672 residues long: ATP-dependent zinc metalloprotease FtsH 1 (672 aa).

The disordered stretch occupies residues 1–22 (MKKDSESNSSDKSNKEELSTGR). Over 1–23 (MKKDSESNSSDKSNKEELSTGRR) the chain is Cytoplasmic. A helical membrane pass occupies residues 24–44 (GGNPMIIALVITVLAAMLFFN). The Periplasmic portion of the chain corresponds to 45–141 (QPEPSSLISA…KFSPPDNTAA (97 aa)). The helical transmembrane segment at 142–162 (ILNLLILVGLPLAIFFFIFMM) threads the bilayer. Topologically, residues 163 to 672 (IRRTRNDMMG…TSNASARRED (510 aa)) are cytoplasmic. Residue 237–244 (GPPGTGKT) participates in ATP binding. H458 provides a ligand contact to Zn(2+). E459 is a catalytic residue. Zn(2+) is bound by residues H462 and D534. A disordered region spans residues 642 to 672 (RLGDEEGKVEQIMAPEGAAERTSNASARRED). Residues 662-672 (RTSNASARRED) show a composition bias toward polar residues.

The protein in the central section; belongs to the AAA ATPase family. In the C-terminal section; belongs to the peptidase M41 family. As to quaternary structure, homohexamer. The cofactor is Zn(2+).

It localises to the cell inner membrane. Acts as a processive, ATP-dependent zinc metallopeptidase for both cytoplasmic and membrane proteins. Plays a role in the quality control of integral membrane proteins. In Rhodopirellula baltica (strain DSM 10527 / NCIMB 13988 / SH1), this protein is ATP-dependent zinc metalloprotease FtsH 1.